The following is a 457-amino-acid chain: MNSTTKHLLHCTLLITVIVTFEVFSGGIKIDENSFTLVDPWTEYGQLATVLLYLLRFLTLLTLPQVLFNFCGLVFYNAFPEKVVLKGSPLLAPFICIRVVTRGDFPDLVKTNVLRNMNTCLDTGLENFLIEVVTDKAVNLSQHRRIREIVVPKEYKTRTGALFKSRALQYCLEDNVNVLNDSDWIVHLDEETLLTENSVRGIINFVLDGKHPFGQGLITYANENVVNWLTTLADSFRVSDDMGKLRLQFKLFHKPLFSWKGSYVVTQVSAERSVSFDNGIDGSVAEDCFFAMRAFSQGYTFNFIEGEMYEKSPFTLLDFLQQRKRWLQGILLVVHSKMIPFKHKLLLGISVYSWVTMPLSTSNIIFAALYPIPCPNLVDFVCAFIAAINIYMYVFGVIKSFSLYRFGLFRFLACVLGAVCTIPVNVVIENVAVIWGLVGKKHKFYVVQKDVRVLETV.

The next 6 membrane-spanning stretches (helical) occupy residues 8–28, 35–55, 57–77, 346–366, 378–398, and 415–435; these read LLHC…SGGI, FTLV…LYLL, FLTL…VFYN, LLGI…NIIF, VDFV…FGVI, and VLGA…AVIW.

Belongs to the glycosyltransferase 2 family.

The protein localises to the membrane. Its function is as follows. Glycosyltransferase with a proposed role in glycosphingolipid biosynthesis. Neurogenic protein implicated in epithelial development. Critical component of a differential oocyte-follicle cell adhesive system. The chain is Beta-1,4-mannosyltransferase egh (egh) from Drosophila melanogaster (Fruit fly).